Consider the following 711-residue polypeptide: Putative DNA topoisomerase 3 (711 aa).

A Toprim domain is found at 2 to 135; the sequence is KYLILAEKPS…LRRLWISSVT (134 aa). Positions 8 and 104 each coordinate Mg(2+). The Topo IA-type catalytic domain occupies 152 to 580; the sequence is YNDLYYAALA…EMKGFTKDVV (429 aa). Positions 186-191 are interaction with DNA; that stretch reads SLGRVQ. Tyrosine 305 functions as the O-(5'-phospho-DNA)-tyrosine intermediate in the catalytic mechanism. Residues 691-711 are disordered; sequence MNKNEGLDNNPFKDALKNLNL.

Belongs to the type IA topoisomerase family. It depends on Mg(2+) as a cofactor.

It catalyses the reaction ATP-independent breakage of single-stranded DNA, followed by passage and rejoining.. Releases the supercoiling and torsional tension of DNA, which is introduced during the DNA replication and transcription, by transiently cleaving and rejoining one strand of the DNA duplex. Introduces a single-strand break via transesterification at a target site in duplex DNA. The scissile phosphodiester is attacked by the catalytic tyrosine of the enzyme, resulting in the formation of a DNA-(5'-phosphotyrosyl)-enzyme intermediate and the expulsion of a 3'-OH DNA strand. The free DNA strand then undergoes passage around the unbroken strand, thus removing DNA supercoils. Finally, in the religation step, the DNA 3'-OH attacks the covalent intermediate to expel the active-site tyrosine and restore the DNA phosphodiester backbone. In Staphylococcus aureus (strain bovine RF122 / ET3-1), this protein is Putative DNA topoisomerase 3.